The chain runs to 361 residues: D-alanine--D-alanine ligase (361 aa).

Positions 134–344 (KLLLKSFDIP…FKDLVDNLID (211 aa)) constitute an ATP-grasp domain. 167 to 222 (KEVLGYPVIVKPAVLGSSIGINVAYSENQIESFIKEALKYDLTIVIEKFIEAREIE) is a binding site for ATP. Residues Asp297, Glu311, and Asn313 each coordinate Mg(2+).

The protein belongs to the D-alanine--D-alanine ligase family. It depends on Mg(2+) as a cofactor. Mn(2+) is required as a cofactor.

The protein resides in the cytoplasm. The catalysed reaction is 2 D-alanine + ATP = D-alanyl-D-alanine + ADP + phosphate + H(+). Its pathway is cell wall biogenesis; peptidoglycan biosynthesis. In terms of biological role, cell wall formation. In Borreliella burgdorferi (strain ATCC 35210 / DSM 4680 / CIP 102532 / B31) (Borrelia burgdorferi), this protein is D-alanine--D-alanine ligase.